The following is a 567-amino-acid chain: MATGFKLPELAPVKSAWGPPETEQIGGDIPYAPFSKGDRLGKIADWSVDQPKDGREQRGRQGAFAGRFRDQYQTYGYGASSIFGYQHSEDESSFSVIDRGSVNRTRTSARNGGTLLKVRGRGQNVQRGGRGGRYGSSGGRGAGDTVVSRSSGAGGARGRRFGWKDYDKHQRLRNASVTVGDDWQLLDEVEFSHLSKLNLAAAAPVTVDSYGYIYPYDKSFDKIHVKSEKPLQALDRVHYNPTTTEDPVIQKLALNSDANIFITDSILSLLMCSTRSVYPWDIVITHQSGKLFFDKREGGPFDYLTVNENAYDSPMDADNREGVNSPGALSVEATYINQNFCVQALRETEEEKYKLPHPNPFYNSKEQSEPLAAHGYIYRDVDLSLETDEKPVKLMVRTEVDGYVKNPANDVQYISIKALNEYDPKFTNVTGSVDWRSKLESQRGAVFATEMKNNSCKLARWTVEALLAGVDSMKVGFVSRSNARDAQHHGILGVVAYKPADLASQMNLSLSNGWGIVRTIADVCLKMPDGKYVLVKDPNRPILRLYSVPPNTFEEAAGPSLEASSTA.

Disordered regions lie at residues 12-34 and 122-160; these read PVKS…YAPF and GQNV…RGRR. Residues 128-142 show a composition bias toward gly residues; the sequence is GGRGGRYGSSGGRGA. An RNA gate region spans residues 300–314; that stretch reads PFDYLTVNENAYDSP.

This sequence belongs to the eIF-3 subunit D family. In terms of assembly, component of the eukaryotic translation initiation factor 3 (eIF-3) complex. The eIF-3 complex appears to include tif32/eif3a, SPAC25G10.08/eif3b, tif33/eif3c, SPBC4C3.07/eif3f, tif35/eif3g and sum1/eif3i. This set of common subunits may also associate exclusively with either moe1/eif3d and int6/eif3e, or with SPAC821.05/eif3h and SPAC1751.03/eif3m. The eIF-3 complex may also include SPAC3A12.13c/eif3j.

Its subcellular location is the cytoplasm. In terms of biological role, mRNA cap-binding component of the eukaryotic translation initiation factor 3 (eIF-3) complex, which is involved in protein synthesis of a specialized repertoire of mRNAs and, together with other initiation factors, stimulates binding of mRNA and methionyl-tRNAi to the 40S ribosome. The eIF-3 complex specifically targets and initiates translation of a subset of mRNAs involved in cell proliferation. In the eIF-3 complex, eif3d specifically recognizes and binds the 7-methylguanosine cap of a subset of mRNAs. This chain is Eukaryotic translation initiation factor 3 subunit D (moe1), found in Schizosaccharomyces pombe (strain 972 / ATCC 24843) (Fission yeast).